A 179-amino-acid chain; its full sequence is Segregation and condensation protein B (179 aa).

It belongs to the ScpB family. Homodimer. Homodimerization may be required to stabilize the binding of ScpA to the Smc head domains. Component of a cohesin-like complex composed of ScpA, ScpB and the Smc homodimer, in which ScpA and ScpB bind to the head domain of Smc. The presence of the three proteins is required for the association of the complex with DNA.

The protein resides in the cytoplasm. In terms of biological role, participates in chromosomal partition during cell division. May act via the formation of a condensin-like complex containing Smc and ScpA that pull DNA away from mid-cell into both cell halves. The chain is Segregation and condensation protein B from Clostridioides difficile (strain 630) (Peptoclostridium difficile).